The following is a 138-amino-acid chain: Putative protein encoded by LINC02912 (138 aa).

A run of 2 helical transmembrane segments spans residues phenylalanine 32–cysteine 52 and cysteine 65–glutamine 85. The segment at serine 109–glycine 138 is disordered.

It is found in the membrane. The sequence is that of Putative protein encoded by LINC02912 from Homo sapiens (Human).